Here is a 154-residue protein sequence, read N- to C-terminus: Fibroblast growth factor 2 (154 aa).

A propeptide spanning residues 1 to 9 is cleaved from the precursor; that stretch reads MAAGSITSL. The interval 1–20 is disordered; it reads MAAGSITSLPALPEDGGGAF. Asn35 is a heparin binding site. At Tyr81 the chain carries Phosphotyrosine; by TEC. Lys94 participates in a covalent cross-link: Glycyl lysine isopeptide (Lys-Gly) (interchain with G-Cter in SUMO1). The heparin-binding stretch occupies residues 127–143; that stretch reads KRTGQYKLGSKTGPGQK.

This sequence belongs to the heparin-binding growth factors family. As to quaternary structure, monomer. Homodimer. Interacts with FGFR1, FGFR2, FGFR3 and FGFR4. Affinity between fibroblast growth factors (FGFs) and their receptors is increased by heparan sulfate glycosaminoglycans that function as coreceptors. Interacts with CSPG4, FGFBP1 and TEC. Found in a complex with FGFBP1, FGF1 and FGF2. Interacts with FGFBP3. Interacts with integrin ITGAV:ITGB3; the interaction is required for FGF2 signaling. Interacts with SNORC (via the extracellular domain). Interacts with GPC3. Phosphorylation at Tyr-81 regulates FGF2 unconventional secretion. Found in all tissues examined.

The protein resides in the secreted. It is found in the nucleus. Acts as a ligand for FGFR1, FGFR2, FGFR3 and FGFR4. Also acts as an integrin ligand which is required for FGF2 signaling. Binds to integrin ITGAV:ITGB3. Plays an important role in the regulation of cell survival, cell division, cell differentiation and cell migration. Functions as a potent mitogen in vitro. Can induce angiogenesis. Mediates phosphorylation of ERK1/2 and thereby promotes retinal lens fiber differentiation. The protein is Fibroblast growth factor 2 (Fgf2) of Rattus norvegicus (Rat).